We begin with the raw amino-acid sequence, 226 residues long: ATP synthase subunit a (226 aa).

A run of 6 helical transmembrane segments spans residues Phe17–Ala37, Leu79–Phe99, Ser105–Ile125, Phe134–Val154, Leu176–Leu196, and Phe199–Ala219.

This sequence belongs to the ATPase A chain family. As to quaternary structure, F-type ATPases have 2 components, CF(1) - the catalytic core - and CF(0) - the membrane proton channel. CF(1) has five subunits: alpha(3), beta(3), gamma(1), delta(1), epsilon(1). CF(0) has three main subunits: a(1), b(2) and c(9-12). The alpha and beta chains form an alternating ring which encloses part of the gamma chain. CF(1) is attached to CF(0) by a central stalk formed by the gamma and epsilon chains, while a peripheral stalk is formed by the delta and b chains.

It localises to the cell inner membrane. Functionally, key component of the proton channel; it plays a direct role in the translocation of protons across the membrane. This Campylobacter jejuni subsp. doylei (strain ATCC BAA-1458 / RM4099 / 269.97) protein is ATP synthase subunit a.